A 134-amino-acid polypeptide reads, in one-letter code: Profilin-2 (134 aa).

Cys13 and Cys118 are disulfide-bonded. The Involved in PIP2 interaction motif lies at 84–100; that stretch reads AVIRGKKGSGGITIKKT. A Phosphothreonine modification is found at Thr114.

The protein belongs to the profilin family. As to quaternary structure, occurs in many kinds of cells as a complex with monomeric actin in a 1:1 ratio. In terms of processing, phosphorylated by MAP kinases.

It localises to the cytoplasm. The protein localises to the cytoskeleton. Binds to actin and affects the structure of the cytoskeleton. At high concentrations, profilin prevents the polymerization of actin, whereas it enhances it at low concentrations. This Olea europaea (Common olive) protein is Profilin-2.